The sequence spans 27 residues: M-lycotoxin-Hc2a (27 aa).

Expressed by the venom gland.

It localises to the secreted. Functionally, forms pore that permeabilize the cell membrane. Promotes efflux of calcium from synaptosomes, causes hemolysis, and dissipates voltage gradients across muscle membrane. Potently inhibits the growth of bacteria, yeast and Leishmania. May function both in the prey capture strategy as well as protection from infectious organisms arising from prey ingestion. The polypeptide is M-lycotoxin-Hc2a (Hogna carolinensis (Carolina wolf spider)).